Reading from the N-terminus, the 333-residue chain is Acetoin:2,6-dichlorophenolindophenol oxidoreductase subunit alpha (333 aa).

In terms of assembly, tetramer of 2 alpha and 2 beta subunits. It depends on thiamine diphosphate as a cofactor.

Its pathway is ketone degradation; acetoin degradation. Functionally, catalyzes the 2,6-dichlorophenolindophenol-dependent cleavage of acetoin into acetate and acetaldehyde, in vitro. The alpha subunit is probably the catalytic subunit of the enzyme. In Cupriavidus necator (strain ATCC 17699 / DSM 428 / KCTC 22496 / NCIMB 10442 / H16 / Stanier 337) (Ralstonia eutropha), this protein is Acetoin:2,6-dichlorophenolindophenol oxidoreductase subunit alpha (acoA).